Here is a 664-residue protein sequence, read N- to C-terminus: Protein LYK5 (664 aa).

The N-terminal stretch at 1-26 (MAACTLHALSVTLFLLLFFAVSPAKA) is a signal peptide. Over 27-277 (QQPYVNNHQL…DPPGSSSSHK (251 aa)) the chain is Extracellular. N-linked (GlcNAc...) asparagine glycosylation is found at Asn45, Asn81, Asn111, Asn125, and Asn129. 3 disulfide bridges follow: Cys52–Cys114, Cys58–Cys181, and Cys112–Cys179. Chitin is bound at residue 135 to 141 (GDETYFS). N-linked (GlcNAc...) asparagine glycosylation is present at Asn144. 164 to 170 (ERQLTPG) provides a ligand contact to chitin. One can recognise a LysM domain in the interval 195–238 (LTYLVAMGDSISGIAEMFNSTSAAITEGNELTSDNIFFFTPVLV). An N-linked (GlcNAc...) asparagine glycan is attached at Asn213. The segment covering 251–269 (PSPPPPPVVATPPQTPVDP) has biased composition (pro residues). Positions 251–270 (PSPPPPPVVATPPQTPVDPP) are disordered. Residues 278–298 (WIYIGIGIGAGLLLLLSILAL) form a helical membrane-spanning segment. The Cytoplasmic portion of the chain corresponds to 299–664 (CFYKRRSKKK…DLLRSGSLGN (366 aa)). The Protein kinase domain maps to 351–643 (KSAIESLTLY…TQVLTTLSMI (293 aa)). Residues 357–365 (LTLYRFNDL) and Lys395 each bind ATP.

Belongs to the protein kinase superfamily. Ser/Thr protein kinase family.

The protein localises to the cell membrane. Functionally, may recognize microbe-derived N-acetylglucosamine (NAG)-containing ligands. This chain is Protein LYK5 (LYK5), found in Arabidopsis thaliana (Mouse-ear cress).